Reading from the N-terminus, the 198-residue chain is Imidazoleglycerol-phosphate dehydratase (198 aa).

Belongs to the imidazoleglycerol-phosphate dehydratase family.

It is found in the cytoplasm. The enzyme catalyses D-erythro-1-(imidazol-4-yl)glycerol 3-phosphate = 3-(imidazol-4-yl)-2-oxopropyl phosphate + H2O. It functions in the pathway amino-acid biosynthesis; L-histidine biosynthesis; L-histidine from 5-phospho-alpha-D-ribose 1-diphosphate: step 6/9. The protein is Imidazoleglycerol-phosphate dehydratase of Methylobacillus flagellatus (strain ATCC 51484 / DSM 6875 / VKM B-1610 / KT).